The sequence spans 1047 residues: Atrial natriuretic peptide receptor 2 (1047 aa).

The signal sequence occupies residues 1–16 (MALPSLLLVVAALAGG). Topologically, residues 17–458 (VRPPGARNLT…DKTPLSTLAI (442 aa)) are extracellular. Residues Asn24 and Asn35 are each glycosylated (N-linked (GlcNAc...) asparagine). The cysteines at positions 75 and 101 are disulfide-linked. Residues Asn161, Asn195, Asn244, Asn277, and Asn349 are each glycosylated (N-linked (GlcNAc...) asparagine). Residues 459-478 (VALGTGITFIMFGVSSFLIF) traverse the membrane as a helical segment. Topologically, residues 479–1047 (RKLMLEKELA…GERKGPPGLL (569 aa)) are cytoplasmic. Ser513 is subject to Phosphoserine. One can recognise a Protein kinase domain in the interval 513–786 (SRLTLSLRGS…PDFGQIKGFI (274 aa)). Thr516 carries the phosphothreonine modification. Residues Ser518, Ser522, Ser523, and Ser526 each carry the phosphoserine modification. Thr529 carries the phosphothreonine modification. Residues 861–991 (TIYFSDIVGF…DTVNTASRME (131 aa)) enclose the Guanylate cyclase domain.

This sequence belongs to the adenylyl cyclase class-4/guanylyl cyclase family. Phosphorylated. Phosphorylation of the protein kinase-like domain is required for full activation by CNP. In terms of processing, glycosylated.

It localises to the cell membrane. It catalyses the reaction GTP = 3',5'-cyclic GMP + diphosphate. Its function is as follows. Receptor for the C-type natriuretic peptide NPPC/CNP hormone. Has guanylate cyclase activity upon binding of its ligand. May play a role in the regulation of skeletal growth. The polypeptide is Atrial natriuretic peptide receptor 2 (Npr2) (Rattus norvegicus (Rat)).